The following is a 388-amino-acid chain: Chorismate synthase (388 aa).

Residues R39 and R45 each contribute to the NADP(+) site. Residues 130–132, 251–252, G296, 311–315, and R337 contribute to the FMN site; these read RSS, NA, and KPIPT.

The protein belongs to the chorismate synthase family. In terms of assembly, homotetramer. It depends on FMNH2 as a cofactor.

The enzyme catalyses 5-O-(1-carboxyvinyl)-3-phosphoshikimate = chorismate + phosphate. Its pathway is metabolic intermediate biosynthesis; chorismate biosynthesis; chorismate from D-erythrose 4-phosphate and phosphoenolpyruvate: step 7/7. In terms of biological role, catalyzes the anti-1,4-elimination of the C-3 phosphate and the C-6 proR hydrogen from 5-enolpyruvylshikimate-3-phosphate (EPSP) to yield chorismate, which is the branch point compound that serves as the starting substrate for the three terminal pathways of aromatic amino acid biosynthesis. This reaction introduces a second double bond into the aromatic ring system. The protein is Chorismate synthase of Streptococcus agalactiae serotype Ia (strain ATCC 27591 / A909 / CDC SS700).